The chain runs to 509 residues: Phosphoprotein (509 aa).

3 disordered regions span residues 33–84 (LESW…LGFR), 131–236 (VQAN…DGNS), and 256–281 (PESR…SAKT). Residues 44–65 (GRATPNPDTSEGDHQNINQSCS) show a composition bias toward polar residues. A compositionally biased stretch (acidic residues) spans 146–157 (DGSDDSDVDSGP). Serine 151 is modified (phosphoserine). Over residues 178–187 (RSTDVEKLEG) the composition is skewed to basic and acidic residues. The segment covering 221-236 (SRPSAQSIKKGTDGNS) has biased composition (polar residues). The interval 303-376 (SEFEYEDDLF…LSSIMIAIPG (74 aa)) is multimerization. The segment at 459-509 (SSRSVIRSIIKSSKLNIDHKDYLLDLLNDVKGSKDLKEFHKMLTAILAKQP) is interaction with the nucleocapsid (N-RNA).

This sequence belongs to the morbillivirus P protein family. Homotetramer. Interacts (via multimerization domain) with polymerase L; this interaction forms the polymerase L-P complex. Interacts (via N-terminus) with N0 (via Ncore); this interaction allows P to chaperon N0 to avoid N polymerization before encapsidation. Interacts (via C-terminus) with N-RNA template; this interaction positions the polymerase on the template for both transcription and replication. Interacts with host ISG15; this interaction disrupts the activity of the N0-P complex. Phosphorylation on serines by host CK2 is necessary for the formation of viral factories.

Functionally, essential cofactor of the RNA polymerase L that plays a central role in the transcription and replication by forming the polymerase complex with RNA polymerase L and recruiting L to the genomic N-RNA template for RNA synthesis. Also plays a central role in the encapsidation of nascent RNA chains by forming the encapsidation complex with the nucleocapsid protein N (N-P complex). Acts as a chaperone for newly synthesized free N protein, so-called N0, allowing encapsidation of nascent RNA chains during replication. The nucleoprotein protein N prevents excessive phosphorylation of P, which leads to down-regulation of viral transcription/ replication. Participates, together with N, in the formation of viral factories (viroplasms), which are large inclusions in the host cytoplasm where replication takes place. This is Phosphoprotein (P/V) from Capra hircus (Goat).